The sequence spans 360 residues: DNA polymerase IV (360 aa).

The 182-residue stretch at 8 to 189 (IIHVDMDCFF…LPLEKIPGVG (182 aa)) folds into the UmuC domain. Mg(2+) contacts are provided by D12 and D107. The active site involves E108.

Belongs to the DNA polymerase type-Y family. Monomer. Mg(2+) is required as a cofactor.

It localises to the cytoplasm. It catalyses the reaction DNA(n) + a 2'-deoxyribonucleoside 5'-triphosphate = DNA(n+1) + diphosphate. Poorly processive, error-prone DNA polymerase involved in untargeted mutagenesis. Copies undamaged DNA at stalled replication forks, which arise in vivo from mismatched or misaligned primer ends. These misaligned primers can be extended by PolIV. Exhibits no 3'-5' exonuclease (proofreading) activity. May be involved in translesional synthesis, in conjunction with the beta clamp from PolIII. This is DNA polymerase IV from Vibrio cholerae serotype O1 (strain ATCC 39541 / Classical Ogawa 395 / O395).